A 130-amino-acid polypeptide reads, in one-letter code: Hypocretin neuropeptide precursor (130 aa).

The N-terminal stretch at 1-32 (MNFPSTKVPWAAVTLLLLLLLPPALLSLGVDA) is a signal peptide. A Pyrrolidone carboxylic acid modification is found at Gln-33. Disulfide bonds link Cys-38-Cys-44 and Cys-39-Cys-46. Leu-65 is subject to Leucine amide. A Methionine amide modification is found at Met-96. Positions 97-130 (GRRAGAELEPHPCSGRGCPTVTTTALAPRGGSGV) are excised as a propeptide.

This sequence belongs to the orexin family. In terms of processing, specific enzymatic cleavages at paired basic residues yield the different active peptides. In terms of tissue distribution, restricted to neuronal cell bodies of the dorsal and lateral hypothalamus.

The protein resides in the rough endoplasmic reticulum. The protein localises to the cytoplasmic vesicle. It localises to the synapse. Its function is as follows. Neuropeptides that play a significant role in the regulation of food intake and sleep-wakefulness, possibly by coordinating the complex behavioral and physiologic responses of these complementary homeostatic functions. A broader role in the homeostatic regulation of energy metabolism, autonomic function, hormonal balance and the regulation of body fluids, is also suggested. Binds to orexin receptors HCRTR1/OX1R and HCRTR2/OX2R with a high affinity. Stimulates food intake. Modulates pituitary luteinizing hormone secretion in an ovarian steroid-dependent manner. In terms of biological role, binds to orexin receptor HCRTR2/OX2R only. Stimulates food intake. Modulates pituitary luteinizing hormone secretion in an ovarian steroid-dependent manner. This Mus musculus (Mouse) protein is Hypocretin neuropeptide precursor (Hcrt).